A 330-amino-acid chain; its full sequence is Aspartate--ammonia ligase (330 aa).

This sequence belongs to the class-II aminoacyl-tRNA synthetase family. AsnA subfamily.

The protein resides in the cytoplasm. It catalyses the reaction L-aspartate + NH4(+) + ATP = L-asparagine + AMP + diphosphate + H(+). The protein operates within amino-acid biosynthesis; L-asparagine biosynthesis; L-asparagine from L-aspartate (ammonia route): step 1/1. The protein is Aspartate--ammonia ligase of Escherichia coli O7:K1 (strain IAI39 / ExPEC).